The sequence spans 205 residues: Small ribosomal subunit protein uS4 (205 aa).

Basic and acidic residues predominate over residues Met-1–Gly-16. Positions Met-1–Ser-46 are disordered. The region spanning Ser-94–Val-157 is the S4 RNA-binding domain.

The protein belongs to the universal ribosomal protein uS4 family. Part of the 30S ribosomal subunit. Contacts protein S5. The interaction surface between S4 and S5 is involved in control of translational fidelity.

Its function is as follows. One of the primary rRNA binding proteins, it binds directly to 16S rRNA where it nucleates assembly of the body of the 30S subunit. Functionally, with S5 and S12 plays an important role in translational accuracy. The protein is Small ribosomal subunit protein uS4 of Bartonella tribocorum (strain CIP 105476 / IBS 506).